A 507-amino-acid chain; its full sequence is Histidine ammonia-lyase (507 aa).

Residues 141 to 143 (ASG) constitute a cross-link (5-imidazolinone (Ala-Gly)). 2,3-didehydroalanine (Ser) is present on S142.

This sequence belongs to the PAL/histidase family. In terms of processing, contains an active site 4-methylidene-imidazol-5-one (MIO), which is formed autocatalytically by cyclization and dehydration of residues Ala-Ser-Gly.

It is found in the cytoplasm. The enzyme catalyses L-histidine = trans-urocanate + NH4(+). It functions in the pathway amino-acid degradation; L-histidine degradation into L-glutamate; N-formimidoyl-L-glutamate from L-histidine: step 1/3. This chain is Histidine ammonia-lyase, found in Burkholderia mallei (strain NCTC 10247).